The following is a 172-amino-acid chain: Translationally-controlled tumor protein homolog (172 aa).

A TCTP domain is found at 1–172; that stretch reads MIIFKDLLTG…FKHGLDEEKV (172 aa).

It belongs to the TCTP family. Expressed by the venom gland.

It localises to the secreted. Venom protein that causes edema, enhances vascular permeability and is likely related to the inflammatory activity of the venom. In Loxosceles intermedia (Brown spider), this protein is Translationally-controlled tumor protein homolog.